Reading from the N-terminus, the 440-residue chain is Transposon Ty1-LR4 Gag polyprotein (440 aa).

3 stretches are compositionally biased toward polar residues: residues 1–10 (MESQQLSQHP), 48–60 (TKAN…TPAS), and 127–152 (QSQF…GNTF). Disordered regions lie at residues 1–93 (MESQ…MMTQ), 126–173 (PQSQ…RPPP), and 352–440 (GSRN…PGTY). Low complexity predominate over residues 153–165 (TDSSSADSDMTST). The interval 299-401 (NNGIHINNKV…NSKSKTARAH (103 aa)) is RNA-binding. Over residues 402-418 (NVSTSNNSPSTDNDSIS) the composition is skewed to low complexity. The residue at position 416 (serine 416) is a Phosphoserine. Polar residues predominate over residues 419-428 (KSTTEPIQLN). Residues 429–440 (NKHDLHLRPGTY) are compositionally biased toward basic and acidic residues.

As to quaternary structure, homotrimer.

The protein localises to the cytoplasm. In terms of biological role, capsid protein (CA) is the structural component of the virus-like particle (VLP), forming the shell that encapsulates the retrotransposons dimeric RNA genome. The particles are assembled from trimer-clustered units and there are holes in the capsid shells that allow for the diffusion of macromolecules. CA also has nucleocapsid-like chaperone activity, promoting primer tRNA(i)-Met annealing to the multipartite primer-binding site (PBS), dimerization of Ty1 RNA and initiation of reverse transcription. The sequence is that of Transposon Ty1-LR4 Gag polyprotein (TY1A-LR4) from Saccharomyces cerevisiae (strain ATCC 204508 / S288c) (Baker's yeast).